Here is an 840-residue protein sequence, read N- to C-terminus: V-type proton ATPase 116 kDa subunit a 4 (840 aa).

At 1 to 390 (MVSVFRSEEM…DAYGVGSYRE (390 aa)) the chain is on the cytoplasmic side. Residues 391 to 409 (INPAPYTIITFPFLFAVMF) traverse the membrane as a helical segment. Over 410-411 (GD) the chain is Vacuolar. The chain crosses the membrane as a helical span at residues 412–428 (CGHGTVMLLAALWMILN). The Cytoplasmic portion of the chain corresponds to 429 to 443 (ERRLLSQKTDNEIWN). The helical transmembrane segment at 444–473 (TFFHGRYLILLMGIFSIYTGLIYNDCFSKS) threads the bilayer. Residues 474 to 538 (LNIFGSSWSV…ASNKLTFLNS (65 aa)) are Vacuolar-facing. Residues 539–558 (YKMKMSVILGIVQMVFGVIL) form a helical membrane-spanning segment. Over 559–576 (SLFNHIYFRRTLNIILQF) the chain is Cytoplasmic. A helical transmembrane segment spans residues 577 to 597 (IPEMIFILCLFGYLVFMIIFK). The Vacuolar segment spans residues 598 to 642 (WCCFDVHVSQHAPSILIHFINMFLFNYSDSSNAPLYKHQQEVQSF). The helical transmembrane segment at 643–662 (FVVMALISVPWMLLIKPFIL) threads the bilayer. Topologically, residues 663–727 (RASHRKSQLQ…DVFVHQAIHT (65 aa)) are cytoplasmic. The disordered stretch occupies residues 675-704 (RIQEDATENIEGDSSSPSSRSGQRTSADTH). The helical transmembrane segment at 728–752 (IEYCLGCISNTASYLRLWALSLAHA) threads the bilayer. At 753–773 (QLSEVLWTMVMNSGLQTRGWG) the chain is on the vacuolar side. Residues 774-812 (GIVGVFIIFAVFAVLTVAILLIMEGLSAFLHALRLHWVE) form a helical membrane-spanning segment. The Cytoplasmic portion of the chain corresponds to 813–840 (FQNKFYVGDGYKFSPFSFKHILDGTAEE).

It belongs to the V-ATPase 116 kDa subunit family. As to quaternary structure, V-ATPase is a heteromultimeric enzyme made up of two complexes: the ATP-hydrolytic V1 complex and the proton translocation V0 complex. The V1 complex consists of three catalytic AB heterodimers that form a heterohexamer, three peripheral stalks each consisting of EG heterodimers, one central rotor including subunits D and F, and the regulatory subunits C and H. The proton translocation complex V0 consists of the proton transport subunit a, a ring of proteolipid subunits c9c'', rotary subunit d, subunits e and f, and the accessory subunits ATP6AP1/Ac45 and ATP6AP2/PRR. Interacts with the V1 complex V-ATPase subunit A ATP6V1A. Interacts with the V0 complex V-ATPase subunit c ATP6V0C. In terms of tissue distribution, expressed in adult and fetal kidney. Found in the inner ear.

Its subcellular location is the apical cell membrane. It localises to the basolateral cell membrane. Its function is as follows. Subunit of the V0 complex of vacuolar(H+)-ATPase (V-ATPase), a multisubunit enzyme composed of a peripheral complex (V1) that hydrolyzes ATP and a membrane integral complex (V0) that translocates protons. V-ATPase is responsible for acidifying and maintaining the pH of intracellular compartments and in some cell types, is targeted to the plasma membrane, where it is responsible for acidifying the extracellular environment. Involved in normal vectorial acid transport into the urine by the kidney. This is V-type proton ATPase 116 kDa subunit a 4 (ATP6V0A4) from Homo sapiens (Human).